Consider the following 773-residue polypeptide: Probable dipeptidyl peptidase 4 (773 aa).

The signal sequence occupies residues 1 to 18 (MKLSVLSVLLVSVAQAAA). N-linked (GlcNAc...) asparagine glycans are attached at residues Asn-37, Asn-80, Asn-112, Asn-220, Asn-471, and Asn-496. Residue Ser-619 is the Charge relay system of the active site. A glycan (N-linked (GlcNAc...) asparagine) is linked at Asn-671. Catalysis depends on charge relay system residues Asp-696 and His-731.

Belongs to the peptidase S9B family.

It localises to the secreted. The enzyme catalyses Release of an N-terminal dipeptide, Xaa-Yaa-|-Zaa-, from a polypeptide, preferentially when Yaa is Pro, provided Zaa is neither Pro nor hydroxyproline.. Functionally, extracellular dipeptidyl-peptidase which removes N-terminal dipeptides sequentially from polypeptides having unsubstituted N-termini provided that the penultimate residue is proline. In Emericella nidulans (strain FGSC A4 / ATCC 38163 / CBS 112.46 / NRRL 194 / M139) (Aspergillus nidulans), this protein is Probable dipeptidyl peptidase 4 (dpp4).